The primary structure comprises 961 residues: Retinoblastoma-like protein homolog lin-35 (961 aa).

Disordered stretches follow at residues 1–43 (MPKR…PPAK) and 55–129 (GGVQ…TPPP). The span at 68-81 (ELTQMTIKQETEGN) shows a compositional bias: polar residues. Residues 107–119 (GEDDDYEEDDADS) show a composition bias toward acidic residues. Ser714 is subject to Phosphoserine; by CDK4. A Phosphothreonine; by CDK4 modification is found at Thr719.

The protein belongs to the retinoblastoma protein (RB) family. As to quaternary structure, component of the DRM complex, at least composed of lin-9, lin-35, lin-37, lin-52, lin-53, lin-54, dpl-1 and efl-1. Interacts with lin-53. Interacts (via C-terminus) with dpl-1 (via C-terminus) and efl-1 (via C-terminus). Interacts (via C-terminus) with lin-8. Phosphorylated by the cyclin dependent kinase cdk-4. Phosphorylation inhibits the transcriptional repressor activity of lin-35 and allows for progression through the G1 phase of the cell cycle during postembryonic development.

The protein localises to the nucleus. In terms of biological role, key regulator of cell division which acts as a transcriptional repressor and negatively regulates cell cycle progression in its active unphosphorylated form, but allows cell cycle progression when phosphorylated. When unphosphorylated and in its active form, interacts with E2F transcription factors such as efl-1 to repress their transcriptional activity and negatively regulate the progression through the G1 phase of the cell cycle during postembryonic development. May furthermore act with cell cycle regulator cki-1 to negatively regulate cell cycle progression. Acts redundantly with lin-53, fzr-1 and lin-23 to control cell cycle progression by regulating the expression of G1 phase cyclins. In particular, negatively regulates the expression of the cyclin E homolog cye-1, which is essential for the G1/S phase transition. Regulates cell division in the intestinal lineage, repressing the expression of genes such as cdc-25.2, which are required for intestinal cells to transition from the karyokinesis cell cycle (also known as nuclear division) to endoreplication, a specific growth pathway in the intestinal epithelium required for feeding and gut development in growing larvae during the L1 stage molt. Its role as a transcriptional repressor in the regulation of intestinal cell division during postembryonic development is most likely in complex with an E2F cell cycle regulatory transcription factor efl-1 and its binding partner the synthetic multivulva class B protein dpl-1. Synthetic multivulva (synMuv) class B protein. SynMuv proteins are required to repress the induction of vulval development by Ras signaling and probably act by forming the multiprotein DRM complex that represses transcription. Together with synMuv class B protein lin-53, and redundantly with synMuv class A protein lin-15A, represses transcription to control vulval development, most likely through antagonization of the Ras-signaling pathway in the major hypodermal syncytium hyp7. Acts redundantly with the transcriptional corepressor spr-1 and the zinc finger protein zfp-2 to play a role in vulval morphogenesis, promote germline proliferation and somatic gonad development. Acts redundantly with ubc-18 in the regulation of pharyngeal morphogenesis during embryonic development by negatively regulating the expression of proteins such as sup-35. Functions with the SWI/SNF complex and proteins such as pha-1 to regulate larval development. Functions redundantly with xnp-1 to regulate somatic gonad development. Acts redundantly with slr-2 to regulate the expression of intestinal genes required for nutrient utilization. Regulates transcription in response to starvation. Furthermore, in response to starvation, promotes germ cell programmed cell death by negatively regulating the expression of the anti-apoptotic protein ced-9. Conversely, in conjunction with mcd-1, efl-1 and the synthetic multivulva class B proteins dpl-1, lin-37 and lin-52, may also regulate transcription to promote programmed cell death independently of ced-1, ced-8 and ced-9 cell death pathways. Directly involved in heterochromatin formation by maintaining overall chromatin structure and, in particular, that of constitutive heterochromatin by stabilizing histone methylation. In particular, negatively regulates the expression of mes-4, a histone methyltransferase that controls the expression of germline specific genes. May play a role in double strand break formation during meiosis. May suppress sensitivity to RNAi. May play a role in the response to endoplasmic reticulum (ER) stress. The protein is Retinoblastoma-like protein homolog lin-35 of Caenorhabditis elegans.